Reading from the N-terminus, the 322-residue chain is Coelomocyte uptake defective protein 15 (322 aa).

The N-terminal stretch at 1 to 20 is a signal peptide; it reads MVNSLSRILFCSLLIFSVIS. N-linked (GlcNAc...) asparagine glycans are attached at residues asparagine 62, asparagine 98, asparagine 144, asparagine 170, asparagine 180, asparagine 183, and asparagine 222. A helical transmembrane segment spans residues 244-264; that stretch reads LFGIMITFGTLLLLTALFYAA.

This sequence belongs to the OSTM1 family.

Its subcellular location is the membrane. In terms of biological role, modulates the transport of substances from the endosomal to lysosomal compartments. Plays a role in lysosome formation and function in coelomocytes. The chain is Coelomocyte uptake defective protein 15 from Caenorhabditis elegans.